A 61-amino-acid chain; its full sequence is ATP synthase F(0) complex subunit 8 (61 aa).

Residues 10-32 traverse the membrane as a helical segment; it reads FMILSSTWLIYTIILQPKILSHL.

Belongs to the ATPase protein 8 family. In terms of assembly, component of the ATP synthase complex composed at least of ATP5F1A/subunit alpha, ATP5F1B/subunit beta, ATP5MC1/subunit c (homooctomer), MT-ATP6/subunit a, MT-ATP8/subunit 8, ATP5ME/subunit e, ATP5MF/subunit f, ATP5MG/subunit g, ATP5MK/subunit k, ATP5MJ/subunit j, ATP5F1C/subunit gamma, ATP5F1D/subunit delta, ATP5F1E/subunit epsilon, ATP5PF/subunit F6, ATP5PB/subunit b, ATP5PD/subunit d, ATP5PO/subunit OSCP. ATP synthase complex consists of a soluble F(1) head domain (subunits alpha(3) and beta(3)) - the catalytic core - and a membrane F(0) domain - the membrane proton channel (subunits c, a, 8, e, f, g, k and j). These two domains are linked by a central stalk (subunits gamma, delta, and epsilon) rotating inside the F1 region and a stationary peripheral stalk (subunits F6, b, d, and OSCP).

The protein localises to the mitochondrion membrane. Its function is as follows. Subunit 8, of the mitochondrial membrane ATP synthase complex (F(1)F(0) ATP synthase or Complex V) that produces ATP from ADP in the presence of a proton gradient across the membrane which is generated by electron transport complexes of the respiratory chain. ATP synthase complex consist of a soluble F(1) head domain - the catalytic core - and a membrane F(1) domain - the membrane proton channel. These two domains are linked by a central stalk rotating inside the F(1) region and a stationary peripheral stalk. During catalysis, ATP synthesis in the catalytic domain of F(1) is coupled via a rotary mechanism of the central stalk subunits to proton translocation. In vivo, can only synthesize ATP although its ATP hydrolase activity can be activated artificially in vitro. Part of the complex F(0) domain. This Chelonia mydas (Green sea-turtle) protein is ATP synthase F(0) complex subunit 8.